The primary structure comprises 155 residues: Small ribosomal subunit protein uS7c (155 aa).

It belongs to the universal ribosomal protein uS7 family. As to quaternary structure, part of the 30S ribosomal subunit.

The protein resides in the plastid. The protein localises to the chloroplast. Functionally, one of the primary rRNA binding proteins, it binds directly to 16S rRNA where it nucleates assembly of the head domain of the 30S subunit. In Dioscorea bulbifera (Air potato), this protein is Small ribosomal subunit protein uS7c (rps7).